A 554-amino-acid chain; its full sequence is Alpha-taxilin (554 aa).

The segment at methionine 1 to alanine 66 is disordered. Serine 71 is subject to Phosphoserine. The tract at residues tyrosine 85–lysine 166 is disordered. The segment covering glutamine 91–proline 103 has biased composition (low complexity). The span at glutamate 143–arginine 158 shows a compositional bias: basic and acidic residues. The stretch at glutamate 186–glycine 491 forms a coiled coil. The disordered stretch occupies residues glycine 492–alanine 554. A phosphoserine mark is found at serine 515 and serine 523.

The protein belongs to the taxilin family. In terms of assembly, binds to the C-terminal coiled coil region of syntaxin family members STX1A, STX3A and STX4A, but not when these proteins are complexed with SNAP25, VAMP2 or STXBP1, suggesting that it interacts with syntaxins that do not form the SNARE complex.

In terms of biological role, may be involved in intracellular vesicle traffic and potentially in calcium-dependent exocytosis in neuroendocrine cells. The chain is Alpha-taxilin (Txlna) from Mus musculus (Mouse).